We begin with the raw amino-acid sequence, 341 residues long: Major histocompatibility complex class I-related protein 1 (341 aa).

An N-terminal signal peptide occupies residues 1 to 22 (MGELMAFLLPLIIVLMVKHSDS). Residues 23-109 (RTHSLRYFRL…KRLQRHYNHS (87 aa)) are alpha-1. The antigen-binding cleft stretch occupies residues 23 to 201 (RTHSLRYFRL…EYGKDILQRT (179 aa)). Over 23-302 (RTHSLRYFRL…QESETIPLVM (280 aa)) the chain is Extracellular. 2 residues coordinate 8-(9H-purin-6-yl)-2-oxa-8-azabicyclo[3.3.1]nona-3,6-diene-4,6-dicarbaldehyde: Tyr-29 and Arg-31. 3 residues coordinate 5-(2-oxoethylideneamino)-6-(D-ribitylamino)uracil: Arg-31, Ser-46, and Lys-65. 5-(2-oxopropylideneamino)-6-(D-ribitylamino)uracil contacts are provided by Arg-31, Ser-46, and Lys-65. 7-hydroxy-6-methyl-8-(1-D-ribityl)lumazine contacts are provided by Arg-31, Ser-46, and Lys-65. Lys-65 and His-80 together coordinate 8-(9H-purin-6-yl)-2-oxa-8-azabicyclo[3.3.1]nona-3,6-diene-4,6-dicarbaldehyde. Residue Lys-65 participates in 2-amino-4-oxopteridine-6-carbaldehyde binding. Lys-65 is a binding site for pyridoxal. Asn-107 carries an N-linked (GlcNAc...) asparagine glycan. Residues 110-201 (GSHTYQRMIG…EYGKDILQRT (92 aa)) form an alpha-2 region. Arg-116 is an 8-(9H-purin-6-yl)-2-oxa-8-azabicyclo[3.3.1]nona-3,6-diene-4,6-dicarbaldehyde binding site. Positions 116, 174, and 175 each coordinate 5-(2-oxoethylideneamino)-6-(D-ribitylamino)uracil. Residues Arg-116, Tyr-174, and Gln-175 each coordinate 5-(2-oxopropylideneamino)-6-(D-ribitylamino)uracil. 7-hydroxy-6-methyl-8-(1-D-ribityl)lumazine-binding residues include Arg-116, Tyr-174, and Gln-175. 2 cysteine pairs are disulfide-bonded: Cys-120–Cys-183 and Cys-222–Cys-278. An alpha-3 region spans residues 202–293 (EPPLVRVNRK…GVHMVLQVPQ (92 aa)). Residues 203 to 299 (PPLVRVNRKE…QVPQESETIP (97 aa)) enclose the Ig-like C1-type domain. Positions 294 to 302 (ESETIPLVM) are connecting peptide. Residues 303–323 (KAVSGSIVLVIVLAGVGVLVW) form a helical membrane-spanning segment. Residues 324-341 (RRRPREQNGAIYLPTPDR) are Cytoplasmic-facing.

It belongs to the MHC class I family. Heterotrimer that consists of MR1, B2M and metabolite antigen. Major classes of metabolite ligands presented by MR1 include riboflavin-related antigens, pyrimidines and ribityl lumazines, nucleobase adducts and folate derivatives. Forms reversible covalent Schiff base complexes with microbial pyrimidine-based metabolite, which serves as a molecular switch triggering complete folding, stable association with B2M and translocation of the ternary complex from endoplasmic reticulum to the plasma membrane. Alternatively, forms non-Schiff base complexes with ribityl lumazines. On antigen-presenting cells, the ternary complex interacts with TCR on MR1-restricted T cells. Interacts with TAPBP and TAPBPL chaperones in the endoplasmic reticulum. TAPBP associated or not with MHC class I peptide loading complex binds ligand-free MR1 or MR1-B2M complex, providing for stable MR1 pools ready for metabolite antigen processing. TAPBPL interacts with MR1 in a ligand-independent way; this interaction may stabilize MR1 pool and facilitate ligand loading and dissociation. Structurally, MR1-B2M heterodimer adopts a topology similar to classical MHC class I molecules, with alpha-1 and alpha-2 domains of MR1 forming the antigen-binding cleft composed of two alpha-helices resting on a floor of 7-stranded anti-parallel beta-pleated sheet. MR1-B2M heterodimer (via alpha-helices) interacts with TCR (via CDR domains). N-glycosylated.

The protein localises to the cell membrane. It localises to the endoplasmic reticulum membrane. Its subcellular location is the golgi apparatus membrane. It is found in the early endosome membrane. The protein resides in the late endosome membrane. In terms of biological role, antigen-presenting molecule specialized in displaying microbial pyrimidine-based metabolites to alpha-beta T cell receptors (TCR) on innate-type mucosal-associated invariant T (MAIT) cells. In complex with B2M preferentially presents riboflavin-derived metabolites to semi-invariant TCRs on MAIT cells, guiding immune surveillance of the microbial metabolome at mucosal epithelial barriers. Signature pyrimidine-based microbial antigens are generated via non-enzymatic condensation of metabolite intermediates of the riboflavin pathway with by-products arising from other metabolic pathways such as glycolysis. Typical potent antigenic metabolites are 5-(2-oxoethylideneamino)-6-D-ribitylaminouracil (5-OE-RU) and 5-(2-oxopropylideneamino)-6-D-ribitylaminouracil (5-OP-RU), products of condensation of 5-amino-6-D-ribityaminouracil (5-A-RU) with glyoxal or methylglyoxal by-products, respectively. May present microbial antigens to various MAIT cell subsets, providing for unique recognition of diverse microbes, including pathogens that do not synthesize riboflavin. Upon antigen recognition, elicits rapid innate-type MAIT cell activation to eliminate pathogenic microbes by directly killing infected cells. During T cell development, drives thymic selection and post-thymic terminal differentiation of MAIT cells in a process dependent on commensal microflora. Acts as an immune sensor of cancer cell metabolome. May present a tumor-specific or -associated metabolite essential for cancer cell survival to a pan-cancer TCR on a non-MAIT CD8-positive T cell clone, triggering T cell-mediated killing of a wide range of cancer cell types. May present tumor-enriched pyridoxal and pyridoxal 5'-phosphate antigens, enabling preferential recognition of cancer cells. Presents nucleobase carbonyl adducts generated during oxidative stress. Captures M3Ade, a nucleobase adduct composed of one adenine modified by a malondialdehyde trimer, for recognition by MR1-restricted T cell clones expressing a polyclonal TCR repertoire. The polypeptide is Major histocompatibility complex class I-related protein 1 (Pan troglodytes (Chimpanzee)).